Here is a 286-residue protein sequence, read N- to C-terminus: MNLKQKWDVYSRLTRIDRPIGTLLLLWPCLMALMLAAGGMPDLKVLVIFIIGVVIMRACGCIINDYADRDLDSFVERTRSRPLASGEISTKEALILFVILGLSAFGLVLLLNGLVVKLSVVGIILTIIYPFTKRITNMPQMFLGIVWSWSIPMAYAAQTGEVPMEAWWLFAANWCWTVAYDTMYAMVDRDDDLKVGIKSTAILFGKYDRQIIGLFQLAALACFIAAGWSADRGLLYGLGILTFVGFSTYQQMLIFDRERAPCFKAFLNNNWAGLALFVGLGADYLI.

7 helical membrane passes run Gly-21–Met-40, Ile-95–Val-115, Phe-142–Val-162, Trp-167–Val-187, Gln-210–Ala-230, Leu-235–Phe-255, and Phe-266–Ile-286.

The protein belongs to the UbiA prenyltransferase family. Requires Mg(2+) as cofactor.

It is found in the cell inner membrane. It carries out the reaction all-trans-octaprenyl diphosphate + 4-hydroxybenzoate = 4-hydroxy-3-(all-trans-octaprenyl)benzoate + diphosphate. The protein operates within cofactor biosynthesis; ubiquinone biosynthesis. Catalyzes the prenylation of para-hydroxybenzoate (PHB) with an all-trans polyprenyl group. Mediates the second step in the final reaction sequence of ubiquinone-8 (UQ-8) biosynthesis, which is the condensation of the polyisoprenoid side chain with PHB, generating the first membrane-bound Q intermediate 3-octaprenyl-4-hydroxybenzoate. This is 4-hydroxybenzoate octaprenyltransferase from Shewanella baltica (strain OS223).